The sequence spans 338 residues: MFQAFPGDYDSGSRCSSSPSAESQYLSSVDSFGSPPTAAASQECAGLGEMPGSFVPTVTAITTSQDLQWLVQPTLISSMAQSQGQPLASQPPAVDPYDMPGTSYSTPGMSGYSSGGASGSGGPSTSGTTSGPGPARPARARLRRPREETLTPEEEEKRRVRRERNKLAAAKCRNRRRELTDRLQAETDQLEEEKAELESEIAELQKEKERLEFVLVAHKPGCKIPYEEGPGPGPLAEVRDLPGSASTKEDGFSWLLPPPPAPPLPFQTSQDAAPNLTASLFTHSEVQVLGDPFPVVNPSYTSSFVLTCPEVSAFAGTQRPSGSDQPTDPLNSPSLLAL.

Disordered stretches follow at residues 1–54 and 80–162; these read MFQA…PGSF and AQSQ…RVRR. Positions 13–31 are enriched in polar residues; the sequence is SRCSSSPSAESQYLSSVDS. At Ser27 the chain carries Phosphoserine. Residues 113–124 are compositionally biased toward gly residues; sequence SSGGASGSGGPS. Residues 125–137 show a composition bias toward low complexity; sequence TSGTTSGPGPARP. Residues 155–218 form the bZIP domain; it reads EEKRRVRRER…ERLEFVLVAH (64 aa). The interval 157-182 is basic motif; the sequence is KRRVRRERNKLAAAKCRNRRRELTDR. A leucine-zipper region spans residues 183 to 211; it reads LQAETDQLEEEKAELESEIAELQKEKERL. Disordered regions lie at residues 222 to 271 and 315 to 338; these read CKIP…TSQD and AGTQ…LLAL. Residues 256–265 show a composition bias toward pro residues; that stretch reads LPPPPAPPLP. Residues 318–338 are compositionally biased toward polar residues; it reads QRPSGSDQPTDPLNSPSLLAL.

Belongs to the bZIP family. Fos subfamily. In terms of assembly, heterodimer; binds to DNA as heterodimer. Component of an AP-1 transcription factor complex; composed of FOS-JUN heterodimers. As part of the AP-1 transcription factor complex, forms heterodimers with JUN, JUNB or JUND, thereby binding to the AP-1 consensus sequence and stimulating transcription. Interacts with the BAF multiprotein chromatin-remodeling complex subunits SMARCB1 and SMARCD1. Interacts with ARID1A and JUN. In terms of processing, phosphorylated.

It is found in the nucleus. In terms of biological role, heterodimerizes with proteins of the JUN family to form an AP-1 transcription factor complex, thereby enhancing their DNA binding activity to an AP-1 consensus sequence 5'-TGA[GC]TCA-3' and enhancing their transcriptional activity. Exhibits transactivation activity in vitro. As part of the AP-1 complex, facilitates enhancer selection together with cell-type-specific transcription factors by collaboratively binding to nucleosomal enhancers and recruiting the SWI/SNF (BAF) chromatin remodeling complex to establish accessible chromatin. Together with JUN, plays a role in activation-induced cell death of T cells by binding to the AP-1 promoter site of FASLG/CD95L, and inducing its transcription in response to activation of the TCR/CD3 signaling pathway. Involved in the display of nurturing behavior towards newborns. May play a role in neurogenesis in the hippocampus and in learning and memory-related tasks by regulating the expression of various genes involved in neurogenesis, depression and epilepsy. Implicated in behavioral responses related to morphine reward and spatial memory. The chain is Protein FosB (FOSB) from Canis lupus familiaris (Dog).